A 186-amino-acid chain; its full sequence is Peptide deformylase (186 aa).

Cys-113 and His-156 together coordinate Fe cation. Glu-157 is an active-site residue. Position 160 (His-160) interacts with Fe cation.

This sequence belongs to the polypeptide deformylase family. The cofactor is Fe(2+).

It carries out the reaction N-terminal N-formyl-L-methionyl-[peptide] + H2O = N-terminal L-methionyl-[peptide] + formate. Removes the formyl group from the N-terminal Met of newly synthesized proteins. Requires at least a dipeptide for an efficient rate of reaction. N-terminal L-methionine is a prerequisite for activity but the enzyme has broad specificity at other positions. This is Peptide deformylase from Lactiplantibacillus plantarum (strain ATCC BAA-793 / NCIMB 8826 / WCFS1) (Lactobacillus plantarum).